The primary structure comprises 82 residues: ATP synthase subunit c (82 aa).

2 helical membrane-spanning segments follow: residues 3–23 (PLVA…ASLG) and 57–77 (LAFM…LLFA).

Belongs to the ATPase C chain family. F-type ATPases have 2 components, F(1) - the catalytic core - and F(0) - the membrane proton channel. F(1) has five subunits: alpha(3), beta(3), gamma(1), delta(1), epsilon(1). F(0) has four main subunits: a(1), b(1), b'(1) and c(10-14). The alpha and beta chains form an alternating ring which encloses part of the gamma chain. F(1) is attached to F(0) by a central stalk formed by the gamma and epsilon chains, while a peripheral stalk is formed by the delta, b and b' chains.

Its subcellular location is the cellular thylakoid membrane. Its function is as follows. F(1)F(0) ATP synthase produces ATP from ADP in the presence of a proton or sodium gradient. F-type ATPases consist of two structural domains, F(1) containing the extramembraneous catalytic core and F(0) containing the membrane proton channel, linked together by a central stalk and a peripheral stalk. During catalysis, ATP synthesis in the catalytic domain of F(1) is coupled via a rotary mechanism of the central stalk subunits to proton translocation. Functionally, key component of the F(0) channel; it plays a direct role in translocation across the membrane. A homomeric c-ring of between 10-14 subunits forms the central stalk rotor element with the F(1) delta and epsilon subunits. The polypeptide is ATP synthase subunit c (Synechococcus sp. (strain PCC 6716)).